Consider the following 100-residue polypeptide: Urease subunit gamma (100 aa).

It belongs to the urease gamma subunit family. Heterotrimer of UreA (gamma), UreB (beta) and UreC (alpha) subunits. Three heterotrimers associate to form the active enzyme.

The protein localises to the cytoplasm. The catalysed reaction is urea + 2 H2O + H(+) = hydrogencarbonate + 2 NH4(+). Its pathway is nitrogen metabolism; urea degradation; CO(2) and NH(3) from urea (urease route): step 1/1. This chain is Urease subunit gamma, found in Lachnoclostridium phytofermentans (strain ATCC 700394 / DSM 18823 / ISDg) (Clostridium phytofermentans).